A 223-amino-acid polypeptide reads, in one-letter code: FAD-dependent monooxygenase imqC (223 aa).

FAD is bound by residues 139–141 (RFY), Tyr189, and Asp210.

The protein belongs to the PheA/TfdB FAD monooxygenase family.

It participates in secondary metabolite biosynthesis. In terms of biological role, FAD-dependent monooxygenase; part of the gene cluster that mediates the biosynthesis of imizoquins A to D, tripeptide-derived alkaloids that serve a protective role against oxidative stress that are essential for normal germination. ImqB is a canonical three-module NRPS that assembles the tripeptide backbone of the imizoquins via condensation of Trp, Tyr, and Leu-derived precursors. N-methylation by imqF and phenol oxidation by imqC, followed by cyclization via the FAD-dependent oxidase imqH carry out the three-step transformation of L-tyrosine into tetrahydroisoquinoline. Importantly, this sequence requires the presence of a free amine in the tyrosine moiety, indicating that isoquinoline formation occurs prior to peptide bond formation. The imidazolidin-4-one ring of imizoquins could form following additional oxidation of the methyl-derived bridgehead carbon by imqH. Lastly, O-methylation by imqG and leucine hydroxylation by imqE complete biosynthesis of the imizoquins. This Aspergillus flavus (strain ATCC 200026 / FGSC A1120 / IAM 13836 / NRRL 3357 / JCM 12722 / SRRC 167) protein is FAD-dependent monooxygenase imqC.